We begin with the raw amino-acid sequence, 206 residues long: Small ribosomal subunit protein uS4 (206 aa).

Positions 96–156 (TRLDNVVYRM…EKSKTQARII (61 aa)) constitute an S4 RNA-binding domain.

This sequence belongs to the universal ribosomal protein uS4 family. In terms of assembly, part of the 30S ribosomal subunit. Contacts protein S5. The interaction surface between S4 and S5 is involved in control of translational fidelity.

Functionally, one of the primary rRNA binding proteins, it binds directly to 16S rRNA where it nucleates assembly of the body of the 30S subunit. In terms of biological role, with S5 and S12 plays an important role in translational accuracy. The protein is Small ribosomal subunit protein uS4 of Colwellia psychrerythraea (strain 34H / ATCC BAA-681) (Vibrio psychroerythus).